A 131-amino-acid polypeptide reads, in one-letter code: Small ribosomal subunit protein uS11 (131 aa).

This sequence belongs to the universal ribosomal protein uS11 family. In terms of assembly, part of the 30S ribosomal subunit. Interacts with proteins S7 and S18. Binds to IF-3.

Functionally, located on the platform of the 30S subunit, it bridges several disparate RNA helices of the 16S rRNA. Forms part of the Shine-Dalgarno cleft in the 70S ribosome. The sequence is that of Small ribosomal subunit protein uS11 from Geobacter sulfurreducens (strain ATCC 51573 / DSM 12127 / PCA).